A 204-amino-acid chain; its full sequence is dTTP/UTP pyrophosphatase (204 aa).

Residue D68 is the Proton acceptor of the active site.

Belongs to the Maf family. YhdE subfamily. Requires a divalent metal cation as cofactor.

Its subcellular location is the cytoplasm. The enzyme catalyses dTTP + H2O = dTMP + diphosphate + H(+). It carries out the reaction UTP + H2O = UMP + diphosphate + H(+). Its function is as follows. Nucleoside triphosphate pyrophosphatase that hydrolyzes dTTP and UTP. May have a dual role in cell division arrest and in preventing the incorporation of modified nucleotides into cellular nucleic acids. This chain is dTTP/UTP pyrophosphatase, found in Thermotoga petrophila (strain ATCC BAA-488 / DSM 13995 / JCM 10881 / RKU-1).